Here is a 382-residue protein sequence, read N- to C-terminus: Mannan endo-1,4-beta-mannosidase (382 aa).

An N-terminal signal peptide occupies residues 1–19; that stretch reads MVKLFSFLLLVWVASPAFS. Substrate is bound by residues Trp83, Asn144, 147–151, and Asn180; that span reads WDESK. The Proton donor/acceptor role is filled by Glu181. Positions 187, 204, 208, 243, 282, and 284 each coordinate substrate. The cysteines at positions 195 and 262 are disulfide-linked. Residue Glu312 is the Nucleophile of the active site. A disulfide bridge links Cys317 with Cys349. Substrate-binding residues include Trp341 and Asp348. Residues 346-350 are involved in stabilization of the transition state; that stretch reads GGDCS.

It belongs to the glycosyl hydrolase 5 (cellulase A) family. Monomer.

The protein localises to the secreted. The catalysed reaction is Random hydrolysis of (1-&gt;4)-beta-D-mannosidic linkages in mannans, galactomannans and glucomannans.. With respect to regulation, activated particularly by Ca(2+) and Zn(2+), and to a lesser extent by Na(+), K(+), Mg(2+) and Cu(2+). Activation effect of the divalent metal ions Ca(2+), Zn(2+), Mg(2+) and Cu(2+) is reduced significantly by the addition of EDTA. Strongly inhibited by Mn(2+), Hg(2+) and Ag(+). In terms of biological role, hydrolyzes 1,4-beta linked polysaccharide backbones of mannans. Has high activity toward locust bean gum. Also active toward konjac and beta-1,4-mannan. Hydrolyzes mannotetraose (M4) and mannopentaose (M5) to mannobiose (M2) and mannotriose (M3) with a little production of mannose (M1). Hydrolyzes beta-1,4-mannan to M2, M3 and M4. Hardly hydrolyzes M2 and M3. Does not hydrolyze p-nitrophenyl-beta-D-mannopyranoside, gua-gum, carboxymethyl cellulose, soluble starch or laminarin. The polypeptide is Mannan endo-1,4-beta-mannosidase (Cryptopygus antarcticus (Antarctic springtail)).